A 617-amino-acid polypeptide reads, in one-letter code: Probable potassium transport system protein Kup 3 (617 aa).

The next 11 membrane-spanning stretches (helical) occupy residues 42–62 (VASL…ALLI), 95–115 (LVVG…TPAI), 129–149 (PSLA…LFMM), 160–180 (IFGP…IHGI), 206–226 (VSFA…AMYA), 240–260 (WFAI…ALLI), 282–302 (LVAF…SGVF), 330–350 (IYVP…VLSF), 360–380 (YGIA…LVAI), 386–406 (PWLV…FFSA), and 411–431 (LFEG…MMLT).

Belongs to the HAK/KUP transporter (TC 2.A.72) family.

It is found in the cell inner membrane. The enzyme catalyses K(+)(in) + H(+)(in) = K(+)(out) + H(+)(out). Functionally, transport of potassium into the cell. Likely operates as a K(+):H(+) symporter. The sequence is that of Probable potassium transport system protein Kup 3 from Bradyrhizobium diazoefficiens (strain JCM 10833 / BCRC 13528 / IAM 13628 / NBRC 14792 / USDA 110).